The chain runs to 303 residues: Quinolinate synthase (303 aa).

Residues His-23 and Ser-40 each contribute to the iminosuccinate site. [4Fe-4S] cluster is bound at residue Cys-85. Iminosuccinate is bound by residues Tyr-111–Asn-113 and Ser-128. Residue Cys-171 participates in [4Fe-4S] cluster binding. Residues His-197–Glu-199 and Thr-214 contribute to the iminosuccinate site. Cys-259 lines the [4Fe-4S] cluster pocket.

Belongs to the quinolinate synthase family. Type 2 subfamily. Requires [4Fe-4S] cluster as cofactor.

The protein resides in the cytoplasm. The catalysed reaction is iminosuccinate + dihydroxyacetone phosphate = quinolinate + phosphate + 2 H2O + H(+). It participates in cofactor biosynthesis; NAD(+) biosynthesis; quinolinate from iminoaspartate: step 1/1. Catalyzes the condensation of iminoaspartate with dihydroxyacetone phosphate to form quinolinate. The polypeptide is Quinolinate synthase (Clostridium acetobutylicum (strain ATCC 824 / DSM 792 / JCM 1419 / IAM 19013 / LMG 5710 / NBRC 13948 / NRRL B-527 / VKM B-1787 / 2291 / W)).